The primary structure comprises 163 residues: MRIEKCYFCSGPIYPGHGMMFVRNDCKVFRFCKSKCHKNFKKKRNPRKVRWTKAFRKAAGKELTVDNSFEFEKRRNEPVKYQRELWNKTIDAMKRVEEIKQRRQAKFIMNRLKKNKELQKVQDIREVKQNIHLIRAPLAGKGKQLEEKMVQQLQEDVDMEDAS.

Belongs to the eukaryotic ribosomal protein eL24 family. In terms of assembly, associated with nucleolar and cytoplasmic pre-60S particles. At the end of biogenesis it dissociates from cytoplasmic pre-60S particles and is likely to be exchanged for its ribosomal homolog, RPL24.

It is found in the nucleus. The protein resides in the nucleolus. Its function is as follows. Involved in the biogenesis of the 60S ribosomal subunit. Ensures the docking of GTPBP4/NOG1 to pre-60S particles. This Rattus norvegicus (Rat) protein is Probable ribosome biogenesis protein RLP24 (Rsl24d1).